A 432-amino-acid chain; its full sequence is Cytoplasmic 60S subunit biogenesis factor REH1 (432 aa).

The segment at 6–30 (FTCNCCVIQFKTSDLQRYHMKTEWH) adopts a C2H2-type 1 zinc-finger fold. The disordered stretch occupies residues 79 to 150 (QSNALPQKQK…NTDYGEDTVS (72 aa)). The span at 86 to 98 (KQKKPIKSKRGRK) shows a compositional bias: basic residues. Basic and acidic residues predominate over residues 105 to 117 (KRKDRDIAKEKQN). The segment covering 118 to 143 (RSVSPSGSISSQLSNLTVGTENTNTD) has biased composition (polar residues). 2 C2H2-type zinc fingers span residues 186–209 (TECIYCGKDNKEVERNVKHMFSEH) and 237–261 (HNCLCCNFHGSGLESIRAHMASKRH).

The protein belongs to the REI1 family. In terms of assembly, associates with nascent pre-60S particles that have not yet entered the translating pool, and is released from mature 60S subunits. Interacts with pre-60S factors NMD3, LSG1, and TIF6.

It localises to the cytoplasm. Pre-60S-associated cytoplasmic factor involved in the cytoplasmic maturation of the 60S subunit. May act redundantly with REI1 to directly promote a stabilizing structural rearrangement in cytoplasmic 60S subunit maturation independent on the REI1-specific ARX1 recycling. This Saccharomyces cerevisiae (strain ATCC 204508 / S288c) (Baker's yeast) protein is Cytoplasmic 60S subunit biogenesis factor REH1 (REH1).